We begin with the raw amino-acid sequence, 1039 residues long: Pleckstrin homology domain-containing family G member 5 (1039 aa).

2 disordered regions span residues 58–105 and 185–277; these read NVST…RRHT and PGDE…SSES. Composition is skewed to basic and acidic residues over residues 185–199 and 217–228; these read PGDEGKVEQGVKDSK and ERVDPQSRRESS. Positions 259–277 are enriched in low complexity; sequence SSCSLPVGSSVGSSGSSES. Positions 372 to 564 constitute a DH domain; sequence HQQEAVWELL…ERFIHHVNTC (193 aa). Positions 620–720 constitute a PH domain; sequence QLLLEGSLRM…WVDTLYNAQN (101 aa). Disordered stretches follow at residues 739–785 and 800–836; these read QHLQ…ASDG and TLSSPEFDRGPFSSQSDEASLSNTTSSITPTSELLPL. Residues 744–757 are compositionally biased toward acidic residues; it reads LEEEEDEQEEEGEE. Composition is skewed to polar residues over residues 758–776 and 811–831; these read SGTSAASSPTILRKSSNSL and FSSQSDEASLSNTTSSITPTS. At threonine 760 the chain carries Phosphothreonine. Serine 765 carries the post-translational modification Phosphoserine. At threonine 876 the chain carries Phosphothreonine. 3 positions are modified to phosphoserine: serine 878, serine 903, and serine 908. A disordered region spans residues 967–989; it reads PLSESENRPSHKAGGPADSARRK.

Interacts with GIPC1/synectin and RHOA. Selectively expressed in cortical and hippocampal neurons with prominent expression in the cell bodies and dendrites. Weakly expressed in rat fad pad ECs (RFPECs).

The protein localises to the cytoplasm. It localises to the perinuclear region. It is found in the cell membrane. Its subcellular location is the cell junction. The protein resides in the cell projection. The protein localises to the lamellipodium. Functions as a guanine exchange factor (GEF) for RAB26 and thus regulates autophagy of synaptic vesicles in axon terminal of motoneurons. Involved in the control of neuronal cell differentiation. Plays a role in angiogenesis through regulation of endothelial cells chemotaxis. Also affects the migration, adhesion, and matrix/bone degradation in macrophages and osteoclasts. In Rattus norvegicus (Rat), this protein is Pleckstrin homology domain-containing family G member 5 (Plekhg5).